The chain runs to 474 residues: Proline--tRNA ligase (474 aa).

The protein belongs to the class-II aminoacyl-tRNA synthetase family. ProS type 3 subfamily. In terms of assembly, homodimer.

Its subcellular location is the cytoplasm. The enzyme catalyses tRNA(Pro) + L-proline + ATP = L-prolyl-tRNA(Pro) + AMP + diphosphate. Its function is as follows. Catalyzes the attachment of proline to tRNA(Pro) in a two-step reaction: proline is first activated by ATP to form Pro-AMP and then transferred to the acceptor end of tRNA(Pro). The protein is Proline--tRNA ligase of Onion yellows phytoplasma (strain OY-M).